Reading from the N-terminus, the 677-residue chain is Methionine--tRNA ligase (677 aa).

The 'HIGH' region motif lies at 15–25; the sequence is PYANGSIHLGH. Residues Cys146, Cys149, Cys159, and Cys162 each contribute to the Zn(2+) site. Positions 333 to 337 match the 'KMSKS' region motif; that stretch reads KMSKS. Lys336 serves as a coordination point for ATP. Residues 575–677 enclose the tRNA-binding domain; it reads DFAKVDLRVA…DGAKPGQQVK (103 aa).

The protein belongs to the class-I aminoacyl-tRNA synthetase family. MetG type 1 subfamily. Homodimer. The cofactor is Zn(2+).

The protein localises to the cytoplasm. The catalysed reaction is tRNA(Met) + L-methionine + ATP = L-methionyl-tRNA(Met) + AMP + diphosphate. Is required not only for elongation of protein synthesis but also for the initiation of all mRNA translation through initiator tRNA(fMet) aminoacylation. This is Methionine--tRNA ligase from Citrobacter koseri (strain ATCC BAA-895 / CDC 4225-83 / SGSC4696).